Consider the following 486-residue polypeptide: Ribosomal RNA small subunit methyltransferase F (486 aa).

S-adenosyl-L-methionine contacts are provided by residues 124-130 (ASAPGSK), Glu-148, Asp-175, and Asp-193. The Nucleophile role is filled by Cys-246.

Belongs to the class I-like SAM-binding methyltransferase superfamily. RsmB/NOP family.

It localises to the cytoplasm. It carries out the reaction cytidine(1407) in 16S rRNA + S-adenosyl-L-methionine = 5-methylcytidine(1407) in 16S rRNA + S-adenosyl-L-homocysteine + H(+). In terms of biological role, specifically methylates the cytosine at position 1407 (m5C1407) of 16S rRNA. The polypeptide is Ribosomal RNA small subunit methyltransferase F (Shewanella baltica (strain OS195)).